Here is a 229-residue protein sequence, read N- to C-terminus: Ribosomal RNA small subunit methyltransferase G (229 aa).

Residues glycine 71, 122 to 123 (AE), and arginine 139 contribute to the S-adenosyl-L-methionine site.

Belongs to the methyltransferase superfamily. RNA methyltransferase RsmG family.

The protein localises to the cytoplasm. In terms of biological role, specifically methylates the N7 position of a guanine in 16S rRNA. The chain is Ribosomal RNA small subunit methyltransferase G from Thermotoga neapolitana (strain ATCC 49049 / DSM 4359 / NBRC 107923 / NS-E).